Here is a 360-residue protein sequence, read N- to C-terminus: Holliday junction branch migration complex subunit RuvB (360 aa).

The interval 1–23 is disordered; that stretch reads MIASVGDSRYYPKSVANGEKSDQ. A large ATPase domain (RuvB-L) region spans residues 12-204; sequence PKSVANGEKS…FGIVLRLEFY (193 aa). ATP is bound by residues Leu-43, Arg-44, Gly-85, Lys-88, Thr-89, Thr-90, 151-153, Arg-194, Tyr-204, and Arg-241; that span reads EDY. Mg(2+) is bound at residue Thr-89. The small ATPAse domain (RuvB-S) stretch occupies residues 205–275; sequence TTEDLKIILK…TAQKALEMLE (71 aa). Residues 278–360 form a head domain (RuvB-H) region; that stretch reads QHGFDEVDRR…KPPKKQDSLF (83 aa). Residues Arg-333 and Arg-338 each coordinate DNA.

The protein belongs to the RuvB family. Homohexamer. Forms an RuvA(8)-RuvB(12)-Holliday junction (HJ) complex. HJ DNA is sandwiched between 2 RuvA tetramers; dsDNA enters through RuvA and exits via RuvB. An RuvB hexamer assembles on each DNA strand where it exits the tetramer. Each RuvB hexamer is contacted by two RuvA subunits (via domain III) on 2 adjacent RuvB subunits; this complex drives branch migration. In the full resolvosome a probable DNA-RuvA(4)-RuvB(12)-RuvC(2) complex forms which resolves the HJ.

The protein localises to the cytoplasm. The catalysed reaction is ATP + H2O = ADP + phosphate + H(+). The RuvA-RuvB-RuvC complex processes Holliday junction (HJ) DNA during genetic recombination and DNA repair, while the RuvA-RuvB complex plays an important role in the rescue of blocked DNA replication forks via replication fork reversal (RFR). RuvA specifically binds to HJ cruciform DNA, conferring on it an open structure. The RuvB hexamer acts as an ATP-dependent pump, pulling dsDNA into and through the RuvAB complex. RuvB forms 2 homohexamers on either side of HJ DNA bound by 1 or 2 RuvA tetramers; 4 subunits per hexamer contact DNA at a time. Coordinated motions by a converter formed by DNA-disengaged RuvB subunits stimulates ATP hydrolysis and nucleotide exchange. Immobilization of the converter enables RuvB to convert the ATP-contained energy into a lever motion, pulling 2 nucleotides of DNA out of the RuvA tetramer per ATP hydrolyzed, thus driving DNA branch migration. The RuvB motors rotate together with the DNA substrate, which together with the progressing nucleotide cycle form the mechanistic basis for DNA recombination by continuous HJ branch migration. Branch migration allows RuvC to scan DNA until it finds its consensus sequence, where it cleaves and resolves cruciform DNA. The protein is Holliday junction branch migration complex subunit RuvB of Koribacter versatilis (strain Ellin345).